A 363-amino-acid polypeptide reads, in one-letter code: Histidinol-phosphate aminotransferase (363 aa).

An N6-(pyridoxal phosphate)lysine modification is found at Lys-220.

This sequence belongs to the class-II pyridoxal-phosphate-dependent aminotransferase family. Histidinol-phosphate aminotransferase subfamily. Homodimer. The cofactor is pyridoxal 5'-phosphate.

It catalyses the reaction L-histidinol phosphate + 2-oxoglutarate = 3-(imidazol-4-yl)-2-oxopropyl phosphate + L-glutamate. The protein operates within amino-acid biosynthesis; L-histidine biosynthesis; L-histidine from 5-phospho-alpha-D-ribose 1-diphosphate: step 7/9. The polypeptide is Histidinol-phosphate aminotransferase (Paramagnetospirillum magneticum (strain ATCC 700264 / AMB-1) (Magnetospirillum magneticum)).